An 832-amino-acid chain; its full sequence is SID1 transmembrane family member 2 (832 aa).

An N-terminal signal peptide occupies residues 1 to 18; sequence MIAWRLPLCVLLVASVES. Residues 19-293 are Extracellular-facing; that stretch reads HLGALGPKNV…VSQAVTSEAY (275 aa). Residues Asn-27, Asn-54, Asn-60, Asn-123, Asn-141, and Asn-165 are each glycosylated (N-linked (GlcNAc...) asparagine). Residues 294-314 traverse the membrane as a helical segment; that stretch reads VGGMLFCLGIFLSFYLLTVLL. The Cytoplasmic portion of the chain corresponds to 315 to 447; the sequence is ACWENWRQRK…DKRVLRKKYQ (133 aa). Residues Ser-401, Ser-403, and Ser-404 each carry the phosphoserine modification. Residues 448–468 traverse the membrane as a helical segment; it reads IYFWNIATIAVFYALPVVQLV. The Extracellular segment spans residues 469–499; it reads ITYQTVVNVTGNQDICYYNFLCAHPLGNLSA. Residues Asn-476 and Asn-496 are each glycosylated (N-linked (GlcNAc...) asparagine). Residues 500 to 520 traverse the membrane as a helical segment; it reads FNNILSNLGYILLGLLFLLII. Topologically, residues 521-546 are cytoplasmic; it reads LQREINHNRALLRNDLYALECGIPKH. The helical transmembrane segment at 547 to 567 threads the bilayer; sequence FGLFYAMGTALMMEGLLSACY. The Extracellular segment spans residues 568–605; that stretch reads HVCPNYTNFQFDTSFMYMIAGLCMLKLYQKRHPDINAS. 2 N-linked (GlcNAc...) asparagine glycosylation sites follow: Asn-572 and Asn-603. Residues 606–626 form a helical membrane-spanning segment; sequence AYSAYACLAIVIFFSVLGVVF. The Cytoplasmic portion of the chain corresponds to 627 to 631; sequence GKGNT. The chain crosses the membrane as a helical span at residues 632 to 652; sequence AFWIVFSVIHIISTLLLSTQL. Residues 653 to 688 lie on the Extracellular side of the membrane; it reads YYMGRWKLDSGIFRRILHVLYTDCIRQCSGPLYTDR. Residues 689–709 form a helical membrane-spanning segment; that stretch reads MVLLVMGNIINWSLAAYGLIM. Residues 710-715 are Cytoplasmic-facing; sequence RPNDFA. The chain crosses the membrane as a helical span at residues 716–736; the sequence is SYLLAIGICNLLLYFAFYIIM. The Extracellular segment spans residues 737 to 746; the sequence is KLRSGERIKL. The helical transmembrane segment at 747 to 767 threads the bilayer; the sequence is IPLLCIVCTSVVWGFALFFFF. Over 768–796 the chain is Cytoplasmic; the sequence is QGLSTWQKTPAESREHNRDCILLDFFDDH. A helical membrane pass occupies residues 797–817; it reads DIWHFLSSIAMFGSFLVLLTL. Residues 818-832 are Extracellular-facing; it reads DDDLDTVQRDKIYVF.

This sequence belongs to the SID1 family. As to quaternary structure, interacts with adapter protein complex 1 (AP-1) and AP-2, but not AP-3 and AP-4. Interacts with LAMP2. Glycosylated. Widely expressed, including in the liver, brain and kidney (at protein level).

It is found in the lysosome membrane. Its subcellular location is the cell membrane. In terms of biological role, mediates the translocation of RNA and DNA across the lysosomal membrane during RNA and DNA autophagy (RDA), a process in which RNA and DNA is directly imported into lysosomes in an ATP-dependent manner, and degraded. Involved in the uptake of single-stranded oligonucleotides by living cells, a process called gymnosis. In vitro, mediates the uptake of linear DNA more efficiently than that of circular DNA, but exhibits similar uptake efficacy toward RNA and DNA. Binds long double-stranded RNA (dsRNA) (500 - 700 base pairs), but not dsRNA shorter than 100 bp. The protein is SID1 transmembrane family member 2 (Sidt2) of Mus musculus (Mouse).